A 376-amino-acid chain; its full sequence is Phytanoyl-CoA hydroxylase-interacting protein-like (376 aa).

The region spanning 52–161 (VPHNIKISNI…EIIEFCTADY (110 aa)) is the Fibronectin type-III domain.

The protein belongs to the PHYHIP family.

In terms of biological role, may play a role in the development of the central system. In Xenopus laevis (African clawed frog), this protein is Phytanoyl-CoA hydroxylase-interacting protein-like (phyhipl).